A 354-amino-acid chain; its full sequence is Biotin synthase (354 aa).

In terms of domain architecture, Radical SAM core spans 40-258; the sequence is NEVQVSTLLS…IAVARILMPR (219 aa). Residues cysteine 55, cysteine 59, and cysteine 62 each contribute to the [4Fe-4S] cluster site. [2Fe-2S] cluster-binding residues include cysteine 99, cysteine 130, cysteine 190, and arginine 262.

It belongs to the radical SAM superfamily. Biotin synthase family. As to quaternary structure, homodimer. Requires [4Fe-4S] cluster as cofactor. [2Fe-2S] cluster is required as a cofactor.

It catalyses the reaction (4R,5S)-dethiobiotin + (sulfur carrier)-SH + 2 reduced [2Fe-2S]-[ferredoxin] + 2 S-adenosyl-L-methionine = (sulfur carrier)-H + biotin + 2 5'-deoxyadenosine + 2 L-methionine + 2 oxidized [2Fe-2S]-[ferredoxin]. It functions in the pathway cofactor biosynthesis; biotin biosynthesis; biotin from 7,8-diaminononanoate: step 2/2. Catalyzes the conversion of dethiobiotin (DTB) to biotin by the insertion of a sulfur atom into dethiobiotin via a radical-based mechanism. This chain is Biotin synthase, found in Hahella chejuensis (strain KCTC 2396).